The following is a 196-amino-acid chain: uncharacterized protein (196 aa).

The 114-residue stretch at 51-164 (VAEHSLLVEE…DRIFGKPDPV (114 aa)) folds into the HD domain.

This is an uncharacterized protein from Rhodobacter capsulatus (strain ATCC BAA-309 / NBRC 16581 / SB1003).